The primary structure comprises 278 residues: Shikimate dehydrogenase (NADP(+)) (278 aa).

Shikimate is bound by residues 19–21 and T66; that span reads SRS. K70 serves as the catalytic Proton acceptor. Residue D82 coordinates NADP(+). Shikimate-binding residues include N91 and D107. NADP(+) is bound by residues 133 to 137, 157 to 162, and I222; these read GAGGA and NRTRAK. Position 224 (Y224) interacts with shikimate. G245 contributes to the NADP(+) binding site.

This sequence belongs to the shikimate dehydrogenase family. Homodimer.

The enzyme catalyses shikimate + NADP(+) = 3-dehydroshikimate + NADPH + H(+). Its pathway is metabolic intermediate biosynthesis; chorismate biosynthesis; chorismate from D-erythrose 4-phosphate and phosphoenolpyruvate: step 4/7. Involved in the biosynthesis of the chorismate, which leads to the biosynthesis of aromatic amino acids. Catalyzes the reversible NADPH linked reduction of 3-dehydroshikimate (DHSA) to yield shikimate (SA). The protein is Shikimate dehydrogenase (NADP(+)) of Dinoroseobacter shibae (strain DSM 16493 / NCIMB 14021 / DFL 12).